The following is a 291-amino-acid chain: Zinc transporter ZupT (291 aa).

Transmembrane regions (helical) follow at residues 8-28 (IFIA…GSII), 39-59 (VLSL…FMEI), 74-94 (HWAE…SLLI), 147-167 (GIFT…ATFI), 174-194 (TLGI…GLAV), 209-229 (FIYS…GALI), 233-253 (FIGD…MVFI), and 271-291 (SLYG…LLGQ). Fe(2+) is bound by residues Asn-158 and Glu-161. Residues Glu-161 and His-186 each coordinate Zn(2+). Residues Asn-187, Glu-190, and Glu-219 each contribute to the Fe(2+) site. A Zn(2+)-binding site is contributed by Glu-190.

It belongs to the ZIP transporter (TC 2.A.5) family. ZupT subfamily.

It is found in the cell inner membrane. It catalyses the reaction Zn(2+)(in) = Zn(2+)(out). In terms of biological role, mediates zinc uptake. May also transport other divalent cations. This chain is Zinc transporter ZupT, found in Campylobacter jejuni subsp. jejuni serotype O:2 (strain ATCC 700819 / NCTC 11168).